We begin with the raw amino-acid sequence, 533 residues long: Probable G-protein coupled receptor Mth-like 14 (533 aa).

A signal peptide spans 1–23; sequence MNLGHWNFLLALISLQTFFNASA. 5 N-linked (GlcNAc...) asparagine glycosylation sites follow: asparagine 20, asparagine 29, asparagine 30, asparagine 36, and asparagine 47. Residues 24 to 242 lie on the Extracellular side of the membrane; the sequence is QISTVNNSSK…QVEEQIAFAK (219 aa). A disordered region spans residues 86 to 108; that stretch reads VQSPVDNPLDPADCSQREKYRKQ. Cysteine 120 and cysteine 216 are joined by a disulfide. Asparagine 133, asparagine 178, and asparagine 206 each carry an N-linked (GlcNAc...) asparagine glycan. The helical transmembrane segment at 243–263 threads the bilayer; that stretch reads VVFVAVLMLISMPCLLLVSYL. Residues 264-279 are Cytoplasmic-facing; sequence HMTLRLLRNLHGLSLS. The helical transmembrane segment at 280-300 threads the bilayer; it reads LMSLCLASGYFVHSVVHIYGI. Topologically, residues 301–303 are extracellular; sequence PNQ. The chain crosses the membrane as a helical span at residues 304-324; the sequence is GFIGYVIQFCILSYFFWYLCI. The Cytoplasmic portion of the chain corresponds to 325-347; it reads CFNVLLNVWYKLPCCIQCSKSWA. A helical membrane pass occupies residues 348–368; that stretch reads TFNFACYAVFAFSGPATIVAL. The Extracellular portion of the chain corresponds to 369–395; sequence TVQKGLPGMPSYFLQGLTESIRDSQRY. The helical transmembrane segment at 396-416 threads the bilayer; the sequence is FIPPVSTILFLSFLLNIISFF. The Cytoplasmic segment spans residues 417–451; sequence GFQRISGYAKAEKNIQERKCLFDQQKYEDVKKDAK. A helical transmembrane segment spans residues 452 to 472; sequence CVSLLGIIMVVSWLLEIITFY. Topologically, residues 473 to 480 are extracellular; it reads SGSNSNYL. Residues 481–501 form a helical membrane-spanning segment; sequence ILCDMVNGLQGVWVLLIFLVV. Over 502 to 533 the chain is Cytoplasmic; that stretch reads RRRRTIILRWWYDRGSHEIEGTELQALSNSPT.

Belongs to the G-protein coupled receptor 2 family. Mth subfamily.

It is found in the cell membrane. This is Probable G-protein coupled receptor Mth-like 14 (mthl14) from Drosophila melanogaster (Fruit fly).